Reading from the N-terminus, the 123-residue chain is Large ribosomal subunit protein uL14 (123 aa).

This sequence belongs to the universal ribosomal protein uL14 family. Part of the 50S ribosomal subunit. Forms a cluster with proteins L3 and L19. In the 70S ribosome, L14 and L19 interact and together make contacts with the 16S rRNA in bridges B5 and B8.

In terms of biological role, binds to 23S rRNA. Forms part of two intersubunit bridges in the 70S ribosome. The chain is Large ribosomal subunit protein uL14 from Buchnera aphidicola subsp. Cinara cedri (strain Cc).